A 158-amino-acid chain; its full sequence is Small ribosomal subunit protein bS6 (158 aa).

The segment covering 92-149 has biased composition (basic and acidic residues); it reads RVDEHEEGPSAMMRKADRDRERDDRGPREGGFRGDREGRGDRDGFRGDRGPRRPREDA. Positions 92–158 are disordered; sequence RVDEHEEGPS…ADAPAAAVEE (67 aa).

The protein belongs to the bacterial ribosomal protein bS6 family.

In terms of biological role, binds together with bS18 to 16S ribosomal RNA. The sequence is that of Small ribosomal subunit protein bS6 from Rhodopseudomonas palustris (strain ATCC BAA-98 / CGA009).